Consider the following 808-residue polypeptide: Probable potassium transporter 3 (808 aa).

Residues 1-34 (MPVADCESGLSPADVTGAGAANGNPGHWRSYYRH) lie on the Cytoplasmic side of the membrane. Residues 35 to 55 (VLLLAYQSCGVVYGDLSTSPL) traverse the membrane as a helical segment. Topologically, residues 56-81 (YVYKSTFIIGSLRRFQDEEIVFGVFS) are extracellular. The helical transmembrane segment at 82-102 (LVFWTLTLIPLLKYVFIVLAA) threads the bilayer. Residues 103 to 167 (DDNGEGGTFA…FLENHRKSRT (65 aa)) are Cytoplasmic-facing. Residues 168-188 (FLLVTVLFGASLVIGDGVLTP) traverse the membrane as a helical segment. The Extracellular portion of the chain corresponds to 189–204 (PMSVLSSFSGLQVHST). A helical membrane pass occupies residues 205-225 (ALTSGEVEILSCTVLVCLFMV). The Cytoplasmic portion of the chain corresponds to 226–232 (QHWGTHR). A helical membrane pass occupies residues 233 to 253 (VAFLFAPVVIVWLLLLGALGV). Topologically, residues 254–283 (YNIVVWNPRVLRALSPYYLVRFFQHTGKDG) are extracellular. The chain crosses the membrane as a helical span at residues 284-304 (WISLGGILLSMTGTEAMYADL). Topologically, residues 305–313 (GHFTAASIR) are cytoplasmic. A helical transmembrane segment spans residues 314–334 (VAFVGLIYPCLVLQYMGQAAF). Over 335-354 (LSKSPHCDIHFVFFESIPTG) the chain is Extracellular. A helical membrane pass occupies residues 355–375 (IFWPVLVIATLAAIVGSQAVI). The Cytoplasmic segment spans residues 376–406 (SATFSIVRQCTALGCFPRVKIVHTSRRIHGQ). A helical membrane pass occupies residues 407–427 (IYSPEINWILMLLCIAVTMGL). Residues 428 to 439 (RDTTLIGNAYGM) are Extracellular-facing. The helical transmembrane segment at 440-460 (ACAGVMLVTTLLMALVIVFVW) threads the bilayer. Residues 461–464 (QYSC) lie on the Cytoplasmic side of the membrane. A helical membrane pass occupies residues 465-485 (LVAALFLVAFGVVEAVYLSAA). The Extracellular segment spans residues 486–491 (LMKVPQ). A helical transmembrane segment spans residues 492 to 512 (GGWLPLVLSLVFVAVMYVWHY). Residues 513-808 (GTRRKHQFDV…LIEVGMIYYV (296 aa)) lie on the Cytoplasmic side of the membrane.

The protein belongs to the HAK/KUP transporter (TC 2.A.72.3) family.

The protein resides in the membrane. Functionally, high-affinity potassium transporter. The chain is Probable potassium transporter 3 (HAK3) from Oryza sativa subsp. japonica (Rice).